We begin with the raw amino-acid sequence, 430 residues long: Protein POLLENLESS 3-LIKE 2 (430 aa).

Residues 1–21 (MMRDVFRPTKSAPCSPAKPLG) form a disordered region. TPR repeat units follow at residues 40 to 73 (DSPY…GDRV), 74 to 107 (DSAL…CSDQ), 110 to 143 (ESLD…IQKG), 170 to 203 (TRLL…APDN), 205 to 236 (KMCN…VVDG), and 238 to 257 (RGVD…LNDL). Positions 81-107 (AIVMKQQNRAEEAIEAIKSLRVRCSDQ) form a coiled coil. The interval 346-376 (KLKRTRSSSQGMGMLSGIGGDHEGETNTSTR) is disordered.

Belongs to the MS5 protein family.

It localises to the nucleus. Probably involved in the regulation of cell division. The chain is Protein POLLENLESS 3-LIKE 2 from Arabidopsis thaliana (Mouse-ear cress).